We begin with the raw amino-acid sequence, 498 residues long: Putative phosphotransferase 057R (498 aa).

This Dryophytes versicolor (chameleon treefrog) protein is Putative phosphotransferase 057R.